We begin with the raw amino-acid sequence, 97 residues long: Small ribosomal subunit protein eS25 (97 aa).

Residues 1–24 form a disordered region; the sequence is MAPAASGAKKQKKKWSKGKVKDKA. Residues 9–18 are compositionally biased toward basic residues; it reads KKQKKKWSKG.

The protein belongs to the eukaryotic ribosomal protein eS25 family. As to quaternary structure, component of the small ribosomal subunit (SSU). Mature N.crassa ribosomes consist of a small (40S) and a large (60S) subunit. The 40S small subunit contains 1 molecule of ribosomal RNA (18S rRNA) and at least 32 different proteins. The large 60S subunit contains 3 rRNA molecules (26S, 5.8S and 5S rRNA) and at least 42 different proteins.

The protein localises to the cytoplasm. In terms of biological role, component of the ribosome, a large ribonucleoprotein complex responsible for the synthesis of proteins in the cell. The small ribosomal subunit (SSU) binds messenger RNAs (mRNAs) and translates the encoded message by selecting cognate aminoacyl-transfer RNA (tRNA) molecules. The large subunit (LSU) contains the ribosomal catalytic site termed the peptidyl transferase center (PTC), which catalyzes the formation of peptide bonds, thereby polymerizing the amino acids delivered by tRNAs into a polypeptide chain. The nascent polypeptides leave the ribosome through a tunnel in the LSU and interact with protein factors that function in enzymatic processing, targeting, and the membrane insertion of nascent chains at the exit of the ribosomal tunnel. This Neurospora crassa (strain ATCC 24698 / 74-OR23-1A / CBS 708.71 / DSM 1257 / FGSC 987) protein is Small ribosomal subunit protein eS25 (rps-25).